A 12345-amino-acid polypeptide reads, in one-letter code: Muscle-specific protein 300 kDa (12345 aa).

Disordered stretches follow at residues 1-68 and 121-152; these read MADS…STVT and WSDG…DAEN. Residues 1–12295 lie on the Cytoplasmic side of the membrane; that stretch reads MADSGGPGSK…GARFLGRVAR (12295 aa). The segment covering 19–28 has biased composition (gly residues); it reads AGGGGAGAAG. The segment covering 45–60 has biased composition (basic and acidic residues); the sequence is EQKSSREQVLEEEKSQ. Residues 249 to 273 form an LRR 1 repeat; that stretch reads FKELENFLEGERTVREVPSADGVRT. Disordered regions lie at residues 295–325, 387–488, and 504–526; these read EGYV…RSVD, TVQV…RKLI, and GKSN…GRPA. Residues 299 to 321 are compositionally biased toward low complexity; sequence SPRDSPSWSRSSYSSERSSVTPP. Polar residues-rich tracts occupy residues 387 to 404 and 414 to 434; these read TVQV…STPQ and TTKT…QTGP. Positions 462-484 are enriched in low complexity; the sequence is TITSTTTKSTSSSTSATSSSSTS. Residues 511–520 are compositionally biased toward acidic residues; that stretch reads NDIDIDNDSD. Calponin-homology (CH) domains are found at residues 630–737 and 777–882; these read RVQK…LYFQ and QGAR…HKYP. Residues 823 to 847 form an LRR 2 repeat; that stretch reads LVNLAELKKTSNRQRLETAFDVAES. A TPR 1 repeat occupies 919–952; sequence SSFPRDFGEYLLARSEVDAHLAAYNRLKQLIESQ. 3 LRR repeats span residues 1089–1112, 1389–1411, and 1616–1642; these read CCLI…YGHE, HLFH…IHQW, and LKDV…ILQR. Residues 1603–1636 form a TPR 2 repeat; the sequence is LEFRLDENAFYQSLKDVEKELQLEQQALNRNEDV. An HAT 1 repeat occupies 1903-1935; it reads TGWNQAYTETSDKLQALKGTQAVWSEFVDQKND. 2 LRR repeats span residues 2087–2109 and 2558–2581; these read KQLD…IAEA and QQQI…FGQA. The region spanning 2109 to 2233 is the Calponin-homology (CH) 3 domain; sequence AKRLKGEITK…SRWTAVHENA (125 aa). One copy of the TPR 3 repeat lies at 2663–2696; it reads ADRIQKYNLISQALREYADSKDKFSKELKKAEDL. Positions 2699–2724 are disordered; it reads AIPQQPRDETELHQASEKTRKTMEQL. Over residues 2704–2724 the composition is skewed to basic and acidic residues; sequence PRDETELHQASEKTRKTMEQL. 3 LRR repeats span residues 2728–2751, 2935–2959, and 3030–3053; these read KLSL…IGEP, CRAL…VDEL, and SSDK…IDDC. Residues 2894–2962 are a coiled coil; sequence EQELRRRSKE…KQKVDELRNL (69 aa). The Spectrin 1 repeat unit spans residues 3110–3207; sequence LWSQYEQSNE…AVSKALTSYI (98 aa). The stretch at 3346 to 3379 is one TPR 4 repeat; sequence KAKVPTTDELYPTLATKKAALQNYKTQLQEITLH. LRR repeat units follow at residues 3370–3393, 3437–3462, 3530–3556, and 3611–3634; these read KTQL…AVTL, LEKA…TFEK, LVKL…WMKN, and NLKL…SIAK. The Spectrin 2 repeat unit spans residues 3539 to 3633; that stretch reads KWDEFDTIIE…LKNLCKESIA (95 aa). A TPR 5 repeat occupies 3629 to 3662; it reads KESIAKYVNYVKDHESFDKDFDSFKQNLQSSVDE. The stretch at 3706-3739 is one HAT 2 repeat; that stretch reads KLYGHTSPEGREIIRQQLRALRTLWDNYTDDLNS. An LRR 15 repeat occupies 3748 to 3771; that stretch reads LLQFNEFSIAQDQLTKWLKDVDKA. The Spectrin 3 repeat unit spans residues 4177–4273; sequence SYQDILNQTV…YDQVGQDCAK (97 aa). The stretch at 4360 to 4393 is one TPR 6 repeat; that stretch reads EVMARDLANLHADFEKFGASLSDVKSGLENRLQQ. An HAT 3 repeat occupies 4371–4403; sequence ADFEKFGASLSDVKSGLENRLQQWNDYEINLDR. The stretch at 4611–4701 is one Spectrin 4 repeat; the sequence is FDEIADSLKS…GKLQKRAQNY (91 aa). 2 LRR repeats span residues 4654–4676 and 4742–4763; these read NDIN…LPEK and EQIS…LADE. The HAT 4 repeat unit spans residues 4799–4830; that stretch reads EWESLLTTISSTIEAIEARLQHWSEYEQLRDQ. The stretch at 4820 to 4919 is one Spectrin 5 repeat; that stretch reads HWSEYEQLRD…VKELNNRWQQ (100 aa). Residues 4839-4863 form an LRR 18 repeat; that stretch reads DNNLHAIDLKEDLPKKRAQLDALKA. An HAT 5 repeat occupies 4894–4926; the sequence is ASGPELVTKYQQIFHKVKELNNRWQQYVTSHED. 2 LRR repeats span residues 5266–5289 and 5333–5357; these read QIDI…EKQV and SSVY…RDQH. A TPR 7 repeat occupies 5645 to 5678; sequence SAEPEDCEIIEQEVALLQEEFDAYREALNKAKDY. LRR repeat units follow at residues 5761–5784, 5820–5843, and 5979–6002; these read SNAI…VMRR, PGTL…FETG, and TKFD…VNSH. Residues 5791–5895 form a Spectrin 6 repeat; that stretch reads EHQQHHSLYE…DLNDVRQKLA (105 aa). The stretch at 6088–6120 is one HAT 6 repeat; the sequence is SEWETLQTISRDARSSLESCLAAWQTFLQKFNK. Spectrin repeat units lie at residues 6321-6405 and 6424-6530; these read RWND…DKLK and AYHQ…RLLE. Coiled coils occupy residues 6356-6397 and 6454-6484; these read MKTL…VNRL and REQT…LNAK. Residues 6363-6387 form an LRR 24 repeat; it reads YKTLSNELKLKGNELEQLQSEARDL. Residues 6522–6555 form a TPR 8 repeat; that stretch reads VQIKNRLLESLAKFQEYEDTLDSIMRNLETYEPI. LRR repeat units lie at residues 6531-6554 and 6560-6587; these read SLAK…TYEP and LDAP…LNNE. Residues 6567-6597 are a coiled coil; it reads LELAQNQLRCAQEMQNKLNNEKSRLAAAVQA. The interval 6631–6657 is disordered; sequence EDLLDQKPPPKTRSSTGGVSTDDDKDE. The TPR 9 repeat unit spans residues 6660–6695; sequence VEIQVELSDVNEALLDPIAHERVKNYRRIVRLNSAH. The stretch at 7004–7026 is one LRR 27 repeat; that stretch reads SALRNLNTENRNLSGVLKAELDR. One copy of the TPR 10 repeat lies at 7161 to 7195; it reads EMETATEGELRTTSLPVLEEQLAHYKKLLSDAENK. 4 LRR repeats span residues 7219 to 7242, 7300 to 7318, 7319 to 7339, and 7340 to 7361; these read LKLN…IDDR, KELK…DDLP, ELQS…DQLA, and HLRQ…IIAF. Residues 7419 to 7457 adopt a coiled-coil conformation; that stretch reads KNSITEQLQSLKNQLQNLRKAVESQRQKHQLQLESHKKM. The stretch at 7524 to 7547 is one LRR 32 repeat; the sequence is SSLLEMLSEGRSLVASLPHELEER. An HAT 7 repeat occupies 7644–7676; sequence TKLTNTLANAKTQQSELEKEAERWREYQQSIDR. One copy of the TPR 11 repeat lies at 7654 to 7687; the sequence is KTQQSELEKEAERWREYQQSIDRVKATIERTKFV. LRR repeat units follow at residues 7692–7714, 7752–7777, and 7816–7840; these read QNLA…VQSQ, QDLV…GFEN, and LREE…ILTF. The stretch at 7759 to 7792 is one TPR 12 repeat; the sequence is EQRRDNLQQLAEHWDGFENSLHAWEKALGRLEDK. The stretch at 7799-7935 forms a coiled coil; it reads TVRSRRHLED…NSQVQQAAEE (137 aa). A TPR 13 repeat occupies 7878-7911; the sequence is SKDLEEIEQVFRRISQLQDKLNALHEQLQSVHVY. LRR repeat units follow at residues 8178 to 8201, 8238 to 8264, 8298 to 8321, and 8354 to 8377; these read KISV…EWDQ, EKTL…HFRN, EQTL…IIQE, and DELL…SLDG. The stretch at 8431 to 8464 is one TPR 14 repeat; sequence QQGITMIANAMHGQKKRQQEIDEYQQHLLELEQW. One copy of the LRR 40 repeat lies at 8534 to 8557; the sequence is EQLQSIITILREQVTVATKRIFTI. Disordered stretches follow at residues 8583 to 8616, 8966 to 9023, 9131 to 9158, 9361 to 9459, 9502 to 9735, and 9769 to 9797; these read IKPP…EEEI, QKPT…LPAP, EFEP…QVVA, GKES…PDSD, LVED…TSIS, and TMQL…EQQL. Residues 8601-8611 show a composition bias toward polar residues; that stretch reads SNENTIDSSSM. Residues 8982 to 9011 show a composition bias toward low complexity; it reads TQVTTTTRTTTATTQEQEQPEQQTQPTTTE. The span at 9136 to 9151 shows a compositional bias: basic and acidic residues; sequence SPHEESTKSDLVKPQE. A compositionally biased stretch (basic residues) spans 9394–9404; sequence KRRRKKKKRRD. A compositionally biased stretch (acidic residues) spans 9410–9419; that stretch reads ELEQEQETEP. Over residues 9420 to 9439 the composition is skewed to low complexity; that stretch reads EPVAAVKEPEVSSDVPVSPE. Residues 9440–9451 show a composition bias toward basic and acidic residues; sequence DSPRDTVRHESI. 3 stretches are compositionally biased toward polar residues: residues 9544–9563, 9587–9597, and 9605–9625; these read AVQT…SQTL, ISTTEIQTDVS, and EISS…TTPK. Over residues 9658–9680 the composition is skewed to low complexity; it reads TSEQSTVTETTTTTETHVQTTTP. Basic and acidic residues predominate over residues 9681-9698; sequence EPREQTEVIKPETAHEET. Residues 9699–9721 form an LRR 41 repeat; sequence STVELVQFADGEMQTTPPGDQQP. Polar residues predominate over residues 9711–9735; it reads MQTTPPGDQQPASLDDSSLTATSIS. The span at 9777–9788 shows a compositional bias: basic residues; that stretch reads KKSKKDKKKKQK. 4 LRR repeats span residues 9995-10019, 10073-10096, 10252-10276, and 10353-10376; these read SNVL…ILEV, EEKL…VVQL, KEFT…SLEQ, and RDEL…TSAD. Coiled coils occupy residues 10072 to 10099 and 10172 to 10257; these read SEEK…LERQ and LSAK…FTKI. Residues 10231–10264 form a TPR 15 repeat; it reads QAERERVLQLQSLAEEYEQTLKEFTKITVLADKL. The stretch at 10426–10458 is one HAT 8 repeat; that stretch reads IVLLKLREEVALYLHRLLVFKEIWVQYEQQTDK. LRR repeat units lie at residues 10512-10535, 10570-10593, and 10644-10667; these read EKSL…QLED, EREL…EEEL, and AEEL…ISNQ. One copy of the TPR 16 repeat lies at 10854–10888; that stretch reads VVAWNDTSENLQQLRTRYQRAVELWDKYRNASAAV. One copy of the HAT 9 repeat lies at 10855–10887; sequence VAWNDTSENLQQLRTRYQRAVELWDKYRNASAA. 2 LRR repeats span residues 10907-10929 and 11021-11043; these read DALQ…ILEL and AHLQ…HQNS. Positions 11016–11046 form a coiled coil; sequence LAALRAHLQTLARTEEQLRQLKERHQNSEVA. The HAT 10 repeat unit spans residues 11070–11104; sequence DTFQEYHRLSTRLARSQNSSEALRLWRQYLQHVQS. The TPR 17 repeat unit spans residues 11072-11105; that stretch reads FQEYHRLSTRLARSQNSSEALRLWRQYLQHVQSF. An LRR 51 repeat occupies 11197-11222; it reads EAERNALQLRYIHLKRVPHLKHRLDA. Coiled coils occupy residues 11220 to 11247 and 11281 to 11308; these read LDAM…LARH and LQRV…AQKL. LRR repeat units lie at residues 11342 to 11365, 11398 to 11422, 11670 to 11692, 11697 to 11720, and 11744 to 11766; these read SALE…DMKT, LSNY…VEKD, EELE…LAMS, PENI…LTPR, and EATN…ENQQ. Positions 11655 to 11685 form a coiled coil; the sequence is KHKLEERQMELRAKLEELESQSVNLRQLEQI. Residues 11776 to 11806 are a coiled coil; sequence LQRLESLEKKLQDAQQHVQQADNLAQEAKTR. An HAT 11 repeat occupies 11804-11836; the sequence is KTRTKQQPQLKQLLELVSAYTTLWQTVQTRIVT. LRR repeat units lie at residues 11959-11981 and 12198-12220; these read DTVA…RQQH and SRLT…YIVK. The segment at 12253–12272 is disordered; the sequence is SMQAAAPNTENANNTDGGDA. Positions 12256–12267 are enriched in low complexity; that stretch reads AAAPNTENANNT. The 59-residue stretch at 12287–12345 folds into the KASH domain; the sequence is ARFLGRVARASLPIQALMLLLLGVATLVPHGEDYTCMFSNTFARSLEPMLSYPHGPPPT. The helical; Anchor for type IV membrane protein transmembrane segment at 12296 to 12316 threads the bilayer; the sequence is ASLPIQALMLLLLGVATLVPH. The stretch at 12301 to 12323 is one LRR 59 repeat; sequence QALMLLLLGVATLVPHGEDYTCM. Residues 12317–12345 lie on the Perinuclear space side of the membrane; it reads GEDYTCMFSNTFARSLEPMLSYPHGPPPT.

The protein belongs to the nesprin family. In terms of assembly, core component of LINC complexes which are composed of inner nuclear membrane SUN domain-containing proteins coupled to outer nuclear membrane KASH domain-containing nesprins. Interacts with klar; this interaction allows the anchoring of the Msp300 nuclear ring structure to the nuclear envelope. Interacts with sls; this interaction mediates the recruitment of Msp300 to the Z-disks.

It is found in the nucleus membrane. The protein resides in the cytoplasm. It localises to the myofibril. Its subcellular location is the sarcomere. The protein localises to the z line. It is found in the cytoskeleton. The protein resides in the microtubule organizing center. It localises to the perinuclear region. Functionally, component of the LINC (LInker of Nucleoskeleton and Cytoskeleton) complex involved in the connection between the nuclear lamina and the cytoskeleton. Collaborates with Klar to promote even spacing of the myonuclei at the periphery of striated muscle fibers by mediating a tight association between a nuclear ring structure of Msp300 and the plus ends of a unique astral MT network. In addition, is essential for anchoring nuclei, mitochondria and endoplasmic reticulum (ER) structures to the Z-disks. In fat body cells, part of perinuclear non-centrosomal microtubule-organizing centers (ncMTOCs) which function to accommodate the organization of microtubule (MT) networks to control nuclear positioning and dynein motor-based retrograde endosomal trafficking. Functions as the primary organizer of the ncMTOC by recruiting Patronin, shot and msps to the organizing centre. Within the ncMTOC, Msp300 and shot anchors the ncMTOC at the nuclear surface and recruits the MT minus-end regulators Patronin and Nin for assembly, anchoring and/or stabilization of circumferential and radial MTs at the ncMTOCs. Patronin, and perhaps Nin, recruits msps to the ncMTOC for the gamma-tubulin-independent elongation of radial MTs. The sequence is that of Muscle-specific protein 300 kDa from Drosophila melanogaster (Fruit fly).